Reading from the N-terminus, the 261-residue chain is Cytochrome c oxidase subunit 3 (261 aa).

Residues 1 to 15 lie on the Mitochondrial matrix side of the membrane; the sequence is MTHQTHAYHMVNPSP. A helical membrane pass occupies residues 16–34; that stretch reads WPLTGALSALLMTSGLIMW. The Mitochondrial intermembrane portion of the chain corresponds to 35–40; that stretch reads FHFNSV. The helical transmembrane segment at 41-66 threads the bilayer; sequence ALLTLGLTTNMLTMYQWWRDVIREST. Topologically, residues 67–72 are mitochondrial matrix; sequence FQGHHT. The helical transmembrane segment at 73–105 threads the bilayer; the sequence is PNVQKGLRYGMILFIISEVLFFTGFFWAFYHSS. Residues 106–128 are Mitochondrial intermembrane-facing; sequence LAPTPELGGCWPPTGIHPLNPLE. A helical membrane pass occupies residues 129–152; that stretch reads VPLLNTSVLLASGVSITWAHHSLM. At 153 to 155 the chain is on the mitochondrial matrix side; that stretch reads EGN. Residues 156-183 form a helical membrane-spanning segment; sequence RNHMLQALFITIALGVYFTLLQASEYYE. Over 184 to 190 the chain is Mitochondrial intermembrane; the sequence is APFTISD. The helical transmembrane segment at 191–223 threads the bilayer; the sequence is GVYGSTFFVATGFHGLHVIIGSTFLIVCFFRQL. At 224-232 the chain is on the mitochondrial matrix side; the sequence is KFHFTSSHH. The helical transmembrane segment at 233–256 threads the bilayer; sequence FGFEAAAWYWHFVDVVWLFLYVSI. The Mitochondrial intermembrane segment spans residues 257–261; it reads YWWGS.

It belongs to the cytochrome c oxidase subunit 3 family. Component of the cytochrome c oxidase (complex IV, CIV), a multisubunit enzyme composed of 14 subunits. The complex is composed of a catalytic core of 3 subunits MT-CO1, MT-CO2 and MT-CO3, encoded in the mitochondrial DNA, and 11 supernumerary subunits COX4I, COX5A, COX5B, COX6A, COX6B, COX6C, COX7A, COX7B, COX7C, COX8 and NDUFA4, which are encoded in the nuclear genome. The complex exists as a monomer or a dimer and forms supercomplexes (SCs) in the inner mitochondrial membrane with NADH-ubiquinone oxidoreductase (complex I, CI) and ubiquinol-cytochrome c oxidoreductase (cytochrome b-c1 complex, complex III, CIII), resulting in different assemblies (supercomplex SCI(1)III(2)IV(1) and megacomplex MCI(2)III(2)IV(2)).

The protein resides in the mitochondrion inner membrane. It catalyses the reaction 4 Fe(II)-[cytochrome c] + O2 + 8 H(+)(in) = 4 Fe(III)-[cytochrome c] + 2 H2O + 4 H(+)(out). Its function is as follows. Component of the cytochrome c oxidase, the last enzyme in the mitochondrial electron transport chain which drives oxidative phosphorylation. The respiratory chain contains 3 multisubunit complexes succinate dehydrogenase (complex II, CII), ubiquinol-cytochrome c oxidoreductase (cytochrome b-c1 complex, complex III, CIII) and cytochrome c oxidase (complex IV, CIV), that cooperate to transfer electrons derived from NADH and succinate to molecular oxygen, creating an electrochemical gradient over the inner membrane that drives transmembrane transport and the ATP synthase. Cytochrome c oxidase is the component of the respiratory chain that catalyzes the reduction of oxygen to water. Electrons originating from reduced cytochrome c in the intermembrane space (IMS) are transferred via the dinuclear copper A center (CU(A)) of subunit 2 and heme A of subunit 1 to the active site in subunit 1, a binuclear center (BNC) formed by heme A3 and copper B (CU(B)). The BNC reduces molecular oxygen to 2 water molecules using 4 electrons from cytochrome c in the IMS and 4 protons from the mitochondrial matrix. The sequence is that of Cytochrome c oxidase subunit 3 (MT-CO3) from Nanger dama (Dama gazelle).